The chain runs to 373 residues: Peroxisomal biogenesis factor 3 (373 aa).

The Cytoplasmic segment spans residues 1–15; that stretch reads MLRSMWNFLKRHKKK. Positions 1–45 are targeting to peroxisomes; sequence MLRSMWNFLKRHKKKCIFLGTVLGGVYILGKYGQKKIREIQEREA. A helical membrane pass occupies residues 16 to 36; it reads CIFLGTVLGGVYILGKYGQKK. The Peroxisomal segment spans residues 37–116; it reads IREIQEREAA…LKIISFTRSI (80 aa). A helical transmembrane segment spans residues 117–140; it reads VAVYSTCMLVVLLRVQLNIIGGYI. An interaction with PEX19 region spans residues 120–136; the sequence is YSTCMLVVLLRVQLNII. The Cytoplasmic segment spans residues 141–373; sequence YLDNATVGKN…AFSTPQQLEK (233 aa).

Belongs to the peroxin-3 family. As to quaternary structure, interacts with PEX19.

It is found in the peroxisome membrane. Functionally, involved in peroxisome biosynthesis and integrity. Assembles membrane vesicles before the matrix proteins are translocated. As a docking factor for PEX19, is necessary for the import of peroxisomal membrane proteins in the peroxisomes. This Cricetulus longicaudatus (Long-tailed dwarf hamster) protein is Peroxisomal biogenesis factor 3 (PEX3).